The chain runs to 579 residues: 2-succinyl-5-enolpyruvyl-6-hydroxy-3-cyclohexene-1-carboxylate synthase (579 aa).

This sequence belongs to the TPP enzyme family. MenD subfamily. Homodimer. Mg(2+) is required as a cofactor. Requires Mn(2+) as cofactor. Thiamine diphosphate serves as cofactor.

It carries out the reaction isochorismate + 2-oxoglutarate + H(+) = 5-enolpyruvoyl-6-hydroxy-2-succinyl-cyclohex-3-ene-1-carboxylate + CO2. The protein operates within quinol/quinone metabolism; 1,4-dihydroxy-2-naphthoate biosynthesis; 1,4-dihydroxy-2-naphthoate from chorismate: step 2/7. It participates in quinol/quinone metabolism; menaquinone biosynthesis. Functionally, catalyzes the thiamine diphosphate-dependent decarboxylation of 2-oxoglutarate and the subsequent addition of the resulting succinic semialdehyde-thiamine pyrophosphate anion to isochorismate to yield 2-succinyl-5-enolpyruvyl-6-hydroxy-3-cyclohexene-1-carboxylate (SEPHCHC). This is 2-succinyl-5-enolpyruvyl-6-hydroxy-3-cyclohexene-1-carboxylate synthase from Oceanobacillus iheyensis (strain DSM 14371 / CIP 107618 / JCM 11309 / KCTC 3954 / HTE831).